Reading from the N-terminus, the 145-residue chain is 3-hydroxyacyl-[acyl-carrier-protein] dehydratase FabZ (145 aa).

H49 is an active-site residue.

It belongs to the thioester dehydratase family. FabZ subfamily.

It localises to the cytoplasm. It carries out the reaction a (3R)-hydroxyacyl-[ACP] = a (2E)-enoyl-[ACP] + H2O. In terms of biological role, involved in unsaturated fatty acids biosynthesis. Catalyzes the dehydration of short chain beta-hydroxyacyl-ACPs and long chain saturated and unsaturated beta-hydroxyacyl-ACPs. This Ehrlichia ruminantium (strain Welgevonden) protein is 3-hydroxyacyl-[acyl-carrier-protein] dehydratase FabZ.